We begin with the raw amino-acid sequence, 308 residues long: Atrochrysone carboxyl ACP thioesterase (308 aa).

Residues histidine 99, histidine 101, aspartate 103, and histidine 104 each contribute to the Zn(2+) site. Aspartate 103 functions as the Proton donor/acceptor in the catalytic mechanism.

This sequence belongs to the metallo-beta-lactamase superfamily. Zn(2+) serves as cofactor.

It carries out the reaction atrochrysone carboxyl-[ACP] + H2O = atrochrysone carboxylate + holo-[ACP] + H(+). It participates in secondary metabolite biosynthesis. Functionally, atrochrysone carboxyl ACP thioesterase; part of the gene cluster that mediates the biosynthesis of physcion, a natural anthraquinone fungicide that can prevent plant fungal infections. The pathway begins with the polyketide synthase AcPKS that condenses 8 malonyl-CoA units to synthesize atrochrysone thioester which is released from the synthase by the atrochrysone carboxyl ACP thioesterase AcTE that breaks the thioester bond and leads to free atrochrysone carboxylic acid. Spontaneous decarboxylation of atrochrysone carboxylic acid leads to the formation of atrochrysone. Then, atrochrysone undergoes spontaneous dehydration and oxidation, giving the products emodin anthrone and emodin. The O-methyltransferase AcOMT then methylates the C-6 hydroxyl of emodin to form physcion. The chain is Atrochrysone carboxyl ACP thioesterase from Aspergillus chevalieri (Eurotium chevalieri).